The chain runs to 259 residues: MQAWQQQLNLFFIAMGFFTRIPMPKWIEVDADKLNKASRYFGLVGLLVGAISALVYTLMLYWVSPSIAIVLAMITSVLVTGGFHEDGLADTADGLGGGWTVEAKLNIMKDSRLGSYGALALVLALLLKWQLLTELALFDPSSVSLALIVGHCLSRVVAASFIFSEPYVSDSDTSKSKPLAQEQGINELSILLATGILALLLVGVMQALVLTLALTIVRYGFVRLFTKQIGGYTGDTLGAAQQGSELTCYLLLLVLGVSW.

6 helical membrane passes run 9–29 (NLFFIAMGFFTRIPMPKWIEV), 43–63 (LVGLLVGAISALVYTLMLYWV), 64–84 (SPSIAIVLAMITSVLVTGGFH), 118–138 (ALALVLALLLKWQLLTELALF), 143–163 (VSLALIVGHCLSRVVAASFIF), and 190–210 (ILLATGILALLLVGVMQALVL).

Belongs to the CobS family. It depends on Mg(2+) as a cofactor.

It localises to the cell inner membrane. It carries out the reaction alpha-ribazole + adenosylcob(III)inamide-GDP = adenosylcob(III)alamin + GMP + H(+). The enzyme catalyses alpha-ribazole 5'-phosphate + adenosylcob(III)inamide-GDP = adenosylcob(III)alamin 5'-phosphate + GMP + H(+). It participates in cofactor biosynthesis; adenosylcobalamin biosynthesis; adenosylcobalamin from cob(II)yrinate a,c-diamide: step 7/7. Its function is as follows. Joins adenosylcobinamide-GDP and alpha-ribazole to generate adenosylcobalamin (Ado-cobalamin). Also synthesizes adenosylcobalamin 5'-phosphate from adenosylcobinamide-GDP and alpha-ribazole 5'-phosphate. This chain is Adenosylcobinamide-GDP ribazoletransferase, found in Shewanella pealeana (strain ATCC 700345 / ANG-SQ1).